A 387-amino-acid polypeptide reads, in one-letter code: Diels-Alderase ORF3 (387 aa).

The protein belongs to the Diels-Alderase family.

It functions in the pathway secondary metabolite biosynthesis. Functionally, diels-Alderase; part of the gene cluster that mediates the biosynthesis of a tyrosine-derived cytochalasan acting as a fungal signal recognized by resistant rice plants and leads to avirulence in Pi33 resistant rice cultivars. The first step in the pathway is catalyzed by the hybrid PKS-NRPS ACE1, assisted by the enoyl reductase RAP1, that are responsible for fusion of the tyrosine precursor and the polyketide backbone. The polyketide synthase module (PKS) of ACE1 is responsible for the synthesis of the polyketide backbone and the downstream nonribosomal peptide synthetase (NRPS) amidates the carboxyl end of the polyketide with the tyrosine precursor. Because ACE1 lacks a designated enoylreductase (ER) domain, the required activity is provided the enoyl reductase RAP1. Reduction by the hydrolyase ORFZ, followed by dehydration and intra-molecular Diels-Alder cyclization by the Diels-Alderase ORF3 then yield the required isoindolone-fused macrocycle. A number of oxidative steps catalyzed by the tailoring enzymes identified within the cluster, including cytochrome P450 monooxygenases CYP1 to CYP4, the FAD-linked oxidoreductase OXR2 and the short-chain dehydrogenase/reductase OXR1, are further required to afford the final cytochalasans that confer avirulence and which have still to be identified. The monooxygenase CYP1 has been shown to be a site-selective C-18 hydroxylase whereas the function of CYP3 is the site-selective epoxidation of the C-6/C-7 olefin that is present in some intermediate compounds. Finally, SYN2 and RAP2 are not required for avirulence in Pi33 resistant rice cultivars. This Pyricularia oryzae (strain 70-15 / ATCC MYA-4617 / FGSC 8958) (Rice blast fungus) protein is Diels-Alderase ORF3.